A 420-amino-acid polypeptide reads, in one-letter code: Bile acid-CoA:amino acid N-acyltransferase (420 aa).

An N6-succinyllysine modification is found at Lys40. Ser125 carries the post-translational modification Phosphoserine. Residues Cys235 and Asp328 each act as charge relay system in the active site. 2 positions are modified to N6-succinyllysine: Lys346 and Lys350. His362 serves as the catalytic Charge relay system. An N6-succinyllysine modification is found at Lys409. Ser418 carries the post-translational modification Phosphoserine.

Belongs to the C/M/P thioester hydrolase family. In terms of assembly, monomer. In terms of tissue distribution, highly expressed in liver, kidney, gallbladder, proximal intestine and distal intestine. Weakly expressed in adrenal gland, lung, brain and muscle.

The protein localises to the cytoplasm. It is found in the cytosol. Its subcellular location is the peroxisome. It carries out the reaction choloyl-CoA + glycine = glycocholate + CoA + H(+). It catalyses the reaction hexadecanoyl-CoA + H2O = hexadecanoate + CoA + H(+). The catalysed reaction is choloyl-CoA + H2O = cholate + CoA + H(+). The enzyme catalyses chenodeoxycholoyl-CoA + H2O = chenodeoxycholate + CoA + H(+). It carries out the reaction eicosanoyl-CoA + H2O = eicosanoate + CoA + H(+). It catalyses the reaction octadecanoyl-CoA + H2O = octadecanoate + CoA + H(+). The catalysed reaction is docosanoyl-CoA + H2O = docosanoate + CoA + H(+). The enzyme catalyses tetracosanoyl-CoA + H2O = tetracosanoate + CoA + H(+). It carries out the reaction hexacosanoyl-CoA + H2O = hexacosanoate + CoA + H(+). It catalyses the reaction dodecanoyl-CoA + H2O = dodecanoate + CoA + H(+). The catalysed reaction is tetradecanoyl-CoA + H2O = tetradecanoate + CoA + H(+). The enzyme catalyses choloyl-CoA + taurine = taurocholate + CoA + H(+). It carries out the reaction chenodeoxycholoyl-CoA + glycine = glycochenodeoxycholate + CoA + H(+). It catalyses the reaction chenodeoxycholoyl-CoA + taurine = taurochenodeoxycholate + CoA + H(+). The catalysed reaction is eicosanoyl-CoA + glycine = N-eicosanoylglycinate + CoA + H(+). The enzyme catalyses hexacosanoyl-CoA + glycine = N-hexacosanoylglycine + CoA + H(+). It carries out the reaction docosanoyl-CoA + glycine = N-docosanoylglycine + CoA + H(+). Functionally, catalyzes the amidation of bile acids (BAs) with the amino acid taurine. Selective for taurine conjugation of cholyl CoA and only taurine-conjugated BAs are found in bile. Amidation of BAs in the liver with taurine prior to their excretion into bile is an important biochemical event in bile acid metabolism. This conjugation (or amidation) plays several important biological roles in that it promotes the secretion of BAs and cholesterol into bile and increases the detergent properties of BAs in the intestine, which facilitates lipid and vitamin absorption. May also act as an acyl-CoA thioesterase that regulates intracellular levels of free fatty acids. In vitro, catalyzes the hydrolysis of long- and very long-chain saturated acyl-CoAs to the free fatty acid and coenzyme A (CoASH), and conjugates glycine to these acyl-CoAs. In Mus musculus (Mouse), this protein is Bile acid-CoA:amino acid N-acyltransferase (Baat).